Here is a 520-residue protein sequence, read N- to C-terminus: Maturase K (520 aa).

This sequence belongs to the intron maturase 2 family. MatK subfamily.

It is found in the plastid. Its subcellular location is the chloroplast. Functionally, usually encoded in the trnK tRNA gene intron. Probably assists in splicing its own and other chloroplast group II introns. The chain is Maturase K from Beaucarnea recurvata (Elephant-foot tree).